We begin with the raw amino-acid sequence, 748 residues long: Phosphoenolpyruvate-dependent phosphotransferase system (748 aa).

In terms of domain architecture, GAF spans Met-1 to Val-127. The segment at Gln-128–Arg-170 is linker. The segment at Ile-171–Leu-748 is PTS EI. His-356 functions as the Tele-phosphohistidine intermediate in the catalytic mechanism. Phosphoenolpyruvate is bound by residues Arg-462 and Arg-498. Mg(2+) contacts are provided by Glu-597 and Asp-621. Phosphoenolpyruvate contacts are provided by residues Asn-620–Asp-621 and Arg-631. Cys-668 (proton donor) is an active-site residue.

It belongs to the PEP-utilizing enzyme family. The cofactor is Mg(2+).

It is found in the cytoplasm. It carries out the reaction L-histidyl-[protein] + phosphoenolpyruvate = N(pros)-phospho-L-histidyl-[protein] + pyruvate. Inhibited by GDP and FAD. Component of the phosphoenolpyruvate-dependent nitrogen-metabolic phosphotransferase system (nitrogen-metabolic PTS), that seems to be involved in regulating nitrogen metabolism. Enzyme I-Ntr transfers the phosphoryl group from phosphoenolpyruvate (PEP) to the phosphoryl carrier protein (NPr). Could function in the transcriptional regulation of sigma-54 dependent operons in conjunction with the NPr (PtsO) and EIIA-Ntr (PtsN) proteins. Enzyme I-Ntr is specific for NPr. The sequence is that of Phosphoenolpyruvate-dependent phosphotransferase system (ptsP) from Escherichia coli (strain K12).